The sequence spans 231 residues: Aquaporin Z (231 aa).

Helical transmembrane passes span L9–F29 and I34–V54. The NPA 1 motif lies at N63–A65. The next 3 helical transmembrane spans lie at I82–I102, S133–T153, and G160–I180. The NPA 2 motif lies at N186–A188. A helical transmembrane segment spans residues L202–I222.

Belongs to the MIP/aquaporin (TC 1.A.8) family. Homotetramer.

It is found in the cell inner membrane. It carries out the reaction H2O(in) = H2O(out). Its function is as follows. Channel that permits osmotically driven movement of water in both directions. It is involved in the osmoregulation and in the maintenance of cell turgor during volume expansion in rapidly growing cells. It mediates rapid entry or exit of water in response to abrupt changes in osmolarity. This chain is Aquaporin Z, found in Photorhabdus laumondii subsp. laumondii (strain DSM 15139 / CIP 105565 / TT01) (Photorhabdus luminescens subsp. laumondii).